The primary structure comprises 351 residues: MQKMRVSGFRVLLLVSCFFCKSKGAVVPALIMFGDSIVDVGNNNNLLSIVKSNFLPYGRDFIDQRPTGRFCNGKLAVDFSAEYLGFSSYPPAFLSREASNENILIGANFASASSGYYDATSVPFGSISLTRQLSYYRAYQNRVTRMIGRGNARILFSRGIHILSAGSSDFLQNYYINPLLNILNTPDQFADILLRSFSEFIQNLYELGARRIGVISLPPMGCLPAAITLFGAGNKSCVERLNNDAIMFNTKLENTTRLLMNRHSGLRLVAFNVYQPFLDIITNPTDNGFFETKRACCGTGTIETSFLCNSLSFGTCVNATGYVFWDGFHPTEAVNELLAGQLLGQGISLIN.

The N-terminal stretch at 1–24 (MQKMRVSGFRVLLLVSCFFCKSKG) is a signal peptide. Ser-36 acts as the Nucleophile in catalysis. Residues Asn-234, Asn-254, and Asn-318 are each glycosylated (N-linked (GlcNAc...) asparagine). Active-site residues include Asp-326 and His-329.

It belongs to the 'GDSL' lipolytic enzyme family.

It localises to the secreted. This is GDSL esterase/lipase At3g53100 from Arabidopsis thaliana (Mouse-ear cress).